Reading from the N-terminus, the 430-residue chain is ATP-dependent RNA helicase RhlB (430 aa).

Residues 9 to 37 (QKFSDFALHPQVIEALETKGFHNCTPIQA) carry the Q motif motif. Positions 40-219 (LPFTLSGRDV…FENMNNAEYV (180 aa)) constitute a Helicase ATP-binding domain. An ATP-binding site is contributed by 53–60 (AQTGTGKT). The DEAD box signature appears at 165-168 (DEAD). Residues 245 to 390 (RLLQTLIEEE…VSRYNSDALM (146 aa)) form the Helicase C-terminal domain. Residues 388-430 (ALMTDLPPPKRLTRNRSGNGPRRGGNNNRRSSASRSPNRKRSG) form a disordered region. The span at 402–423 (NRSGNGPRRGGNNNRRSSASRS) shows a compositional bias: low complexity.

It belongs to the DEAD box helicase family. RhlB subfamily. In terms of assembly, component of the RNA degradosome, which is a multiprotein complex involved in RNA processing and mRNA degradation.

The protein localises to the cytoplasm. The catalysed reaction is ATP + H2O = ADP + phosphate + H(+). In terms of biological role, DEAD-box RNA helicase involved in RNA degradation. Has RNA-dependent ATPase activity and unwinds double-stranded RNA. This is ATP-dependent RNA helicase RhlB from Erwinia tasmaniensis (strain DSM 17950 / CFBP 7177 / CIP 109463 / NCPPB 4357 / Et1/99).